Reading from the N-terminus, the 356-residue chain is Dual-specificity RNA methyltransferase RlmN (356 aa).

The active-site Proton acceptor is the Glu92. The Radical SAM core domain maps to 98–327 (EKNRGTLCIS…HQGIRTMTRR (230 aa)). A disulfide bond links Cys105 and Cys337. Cys112, Cys116, and Cys119 together coordinate [4Fe-4S] cluster. Residues 162–163 (GE), Ser194, 216–218 (SLH), and Asn294 contribute to the S-adenosyl-L-methionine site. The S-methylcysteine intermediate role is filled by Cys337.

This sequence belongs to the radical SAM superfamily. RlmN family. It depends on [4Fe-4S] cluster as a cofactor.

The protein resides in the cytoplasm. The enzyme catalyses adenosine(2503) in 23S rRNA + 2 reduced [2Fe-2S]-[ferredoxin] + 2 S-adenosyl-L-methionine = 2-methyladenosine(2503) in 23S rRNA + 5'-deoxyadenosine + L-methionine + 2 oxidized [2Fe-2S]-[ferredoxin] + S-adenosyl-L-homocysteine. The catalysed reaction is adenosine(37) in tRNA + 2 reduced [2Fe-2S]-[ferredoxin] + 2 S-adenosyl-L-methionine = 2-methyladenosine(37) in tRNA + 5'-deoxyadenosine + L-methionine + 2 oxidized [2Fe-2S]-[ferredoxin] + S-adenosyl-L-homocysteine. Functionally, specifically methylates position 2 of adenine 2503 in 23S rRNA and position 2 of adenine 37 in tRNAs. m2A2503 modification seems to play a crucial role in the proofreading step occurring at the peptidyl transferase center and thus would serve to optimize ribosomal fidelity. This Ruthia magnifica subsp. Calyptogena magnifica protein is Dual-specificity RNA methyltransferase RlmN.